The following is a 734-amino-acid chain: Photosystem I P700 chlorophyll a apoprotein A2 (734 aa).

Helical transmembrane passes span 46 to 69 (IFASHFGQLAIIFLWTSGNLFHVA), 135 to 158 (LYTGALFLLFLSAISLIAGWLHLQ), 175 to 199 (LNHHLSGLFGVSSLAWTGHLVHVAI), 273 to 291 (IAHHHLAIAFIFLVAGHMY), 330 to 353 (LHFQLGLALASLGVITSLVAQHMY), 369 to 395 (AALYTHHQYIAGFIMTGAFAHGAIFFI), 417 to 439 (AIISHLSWASLFLGFHTLGLYVH), and 517 to 535 (FLVHHAIALGLHTTTLILV). [4Fe-4S] cluster is bound by residues Cys559 and Cys568. Helical transmembrane passes span 575 to 596 (AFYLAVFWMLNTIGWVTFYWHW) and 643 to 665 (LSVWAWMFLFGHLVWATGFMFLI). Residues His654, Met662, and Tyr670 each coordinate chlorophyll a. Phylloquinone is bound at residue Trp671. The helical transmembrane segment at 707–727 (LVGLAHFSVGYIFTYAAFLIA) threads the bilayer.

This sequence belongs to the PsaA/PsaB family. As to quaternary structure, the PsaA/B heterodimer binds the P700 chlorophyll special pair and subsequent electron acceptors. PSI consists of a core antenna complex that captures photons, and an electron transfer chain that converts photonic excitation into a charge separation. The eukaryotic PSI reaction center is composed of at least 11 subunits. It depends on P700 is a chlorophyll a/chlorophyll a' dimer, A0 is one or more chlorophyll a, A1 is one or both phylloquinones and FX is a shared 4Fe-4S iron-sulfur center. as a cofactor.

Its subcellular location is the plastid. It is found in the chloroplast thylakoid membrane. It carries out the reaction reduced [plastocyanin] + hnu + oxidized [2Fe-2S]-[ferredoxin] = oxidized [plastocyanin] + reduced [2Fe-2S]-[ferredoxin]. Its function is as follows. PsaA and PsaB bind P700, the primary electron donor of photosystem I (PSI), as well as the electron acceptors A0, A1 and FX. PSI is a plastocyanin-ferredoxin oxidoreductase, converting photonic excitation into a charge separation, which transfers an electron from the donor P700 chlorophyll pair to the spectroscopically characterized acceptors A0, A1, FX, FA and FB in turn. Oxidized P700 is reduced on the lumenal side of the thylakoid membrane by plastocyanin. This is Photosystem I P700 chlorophyll a apoprotein A2 from Citrus sinensis (Sweet orange).